The sequence spans 341 residues: Retinol dehydrogenase 10 (341 aa).

Residues 3 to 23 (IVLEFFLVTFKVLWAFVLAAA) form a helical; Signal-anchor membrane-spanning segment. Residue 40-64 (LITGAGSGLGRLFALEFARRRAQLV) coordinates NADP(+). Residue S197 coordinates substrate. Catalysis depends on Y210, which acts as the Proton acceptor.

This sequence belongs to the short-chain dehydrogenases/reductases (SDR) family.

Its subcellular location is the microsome membrane. It localises to the endoplasmic reticulum membrane. It catalyses the reaction all-trans-retinol + NADP(+) = all-trans-retinal + NADPH + H(+). Its pathway is cofactor metabolism; retinol metabolism. Its function is as follows. Retinol dehydrogenase with a clear preference for NADP. Converts all-trans-retinol to all-trans-retinal. Has no detectable activity towards 11-cis-retinol, 9-cis-retinol and 13-cis-retinol. The chain is Retinol dehydrogenase 10 (rdh10) from Xenopus tropicalis (Western clawed frog).